The sequence spans 164 residues: Dynein regulatory complex protein 8 (164 aa).

2 consecutive EF-hand domains span residues 16 to 51 (ELHK…LGCC) and 94 to 129 (AAED…EGEP).

It belongs to the DRC8 family. As to quaternary structure, component of the nexin-dynein regulatory complex (N-DRC).

It is found in the cytoplasm. The protein localises to the cytoskeleton. It localises to the flagellum axoneme. Component of the nexin-dynein regulatory complex (N-DRC), a key regulator of ciliary/flagellar motility which maintains the alignment and integrity of the distal axoneme and regulates microtubule sliding in motile axonemes. This chain is Dynein regulatory complex protein 8 (Efcab2), found in Mus musculus (Mouse).